The primary structure comprises 309 residues: DDRGK domain-containing protein 1 (309 aa).

Residues 1–2 (MD) are Lumenal-facing. A helical transmembrane segment spans residues 3–23 (LIILVGIASALLVVILTIFFL). Topologically, residues 24-309 (QKKKGGTEAK…VSAGAGEGSS (286 aa)) are cytoplasmic. The tract at residues 30–178 (TEAKEAAAPP…RLVKEERERK (149 aa)) is disordered. The span at 53 to 84 (RRAQIARNQRNRLRQNAPAAAPAAAAALQAAD) shows a compositional bias: low complexity. The segment covering 85-95 (AEGDNDDENPD) has biased composition (acidic residues). Over residues 107-178 (LDEKMGAKKR…RLVKEERERK (72 aa)) the composition is skewed to basic and acidic residues.

Belongs to the DDRGK1 family. In terms of assembly, interacts with Atg9; the interaction is transient.

The protein localises to the endoplasmic reticulum membrane. Its function is as follows. Substrate adapter for ufmylation, the covalent attachment of the ubiquitin-like modifier UFM1 to substrate proteins. Required for ufmylation of Atg9; protects the nervous system during aging, possibly by stabilizing Atg9 and supporting its function. The protein is DDRGK domain-containing protein 1 of Drosophila persimilis (Fruit fly).